A 213-amino-acid polypeptide reads, in one-letter code: ER lumen protein-retaining receptor erd-2.1 (213 aa).

Over 1-2 (MN) the chain is Lumenal. A helical membrane pass occupies residues 3-21 (LFRFTADVAHAIAIVVLLL). At 22 to 35 (KIWKSRSCEGISGR) the chain is on the cytoplasmic side. A helical membrane pass occupies residues 36-53 (SQLLFALVFVTRYLDLFT). The Lumenal portion of the chain corresponds to 54 to 61 (NFFSFYNT). A helical transmembrane segment spans residues 62–80 (AMKIFYLVASFGTVYLMWA). Topologically, residues 81 to 96 (KFKATYDRNNDSFRIE) are cytoplasmic. The helical transmembrane segment at 97–110 (FLVIPSMILALLIN) threads the bilayer. Over 111 to 117 (HEFIFME) the chain is Lumenal. A helical transmembrane segment spans residues 118–137 (VMWTFSIYLEAVAIMPQLFM). At 138 to 149 (LSRTGNAETITA) the chain is on the cytoplasmic side. Residues 150 to 168 (HYLFALGSYRFLYILNWVY) form a helical membrane-spanning segment. Residues 169–178 (RYYTESFFDP) lie on the Lumenal side of the membrane. Residues 179-199 (ISVVAGIVQTVLYADFFYLYI) form a helical membrane-spanning segment. The Cytoplasmic segment spans residues 200–213 (TRVIQSNRQFEMSA).

It belongs to the ERD2 family.

The protein localises to the endoplasmic reticulum membrane. Its function is as follows. Required for the retention of luminal endoplasmic reticulum proteins. Determines the specificity of the luminal ER protein retention system. Also required for normal vesicular traffic through the Golgi. This chain is ER lumen protein-retaining receptor erd-2.1, found in Caenorhabditis elegans.